A 77-amino-acid chain; its full sequence is Putative sulfur carrier protein AF_0188 (77 aa).

Residue Cys-11 is the Cysteine persulfide intermediate of the active site.

Belongs to the sulfur carrier protein TusA family.

In Archaeoglobus fulgidus (strain ATCC 49558 / DSM 4304 / JCM 9628 / NBRC 100126 / VC-16), this protein is Putative sulfur carrier protein AF_0188.